Here is a 208-residue protein sequence, read N- to C-terminus: Small ribosomal subunit protein bS6 (208 aa).

Disordered regions lie at residues 121–143 (SENN…KPRL) and 185–208 (NQQT…GAKP). The span at 185-195 (NQQTSQANNNQ) shows a compositional bias: low complexity.

This sequence belongs to the bacterial ribosomal protein bS6 family.

In terms of biological role, binds together with bS18 to 16S ribosomal RNA. In Mycoplasma genitalium (strain ATCC 33530 / DSM 19775 / NCTC 10195 / G37) (Mycoplasmoides genitalium), this protein is Small ribosomal subunit protein bS6 (rpsF).